The sequence spans 1802 residues: Protein TIC 214 (1802 aa).

6 helical membrane-spanning segments follow: residues I19–G39, F68–L88, P91–H111, V133–L153, V176–I196, and I227–I247.

This sequence belongs to the TIC214 family. In terms of assembly, part of the Tic complex.

It localises to the plastid. The protein localises to the chloroplast inner membrane. Functionally, involved in protein precursor import into chloroplasts. May be part of an intermediate translocation complex acting as a protein-conducting channel at the inner envelope. This chain is Protein TIC 214, found in Nasturtium officinale (Watercress).